The chain runs to 969 residues: MLDFLKRFFGSSQERTLKKFQKLVDKVNLYDEMLAPLSDEELRNKTGELKKRYQEGESLDDMLPEAYAVVKNVCRRLTGTPVEVSGYHQNWDMVPYDVQVLGAIAMHKGFITEMQTGEGKTLTAVMPLYLNALTGKPVHLVTVNDYLAQRDCEWVGSILRWLGLTTGVLISGSPLEKRKEIYRCDVVYGTASEFGFDYLRDNSIATSVDEQVGRGFYFAIIDEVDSILIDEARTPLIISGPGEKHNPVYFELKDKVAELVQLQRELCNQLALEARRGLEHFLDMDILPKDKKVIEGISEFCRSLWLVSKGMPLNRVLRRVREHPDLRAMIDKWDTYYHAEQNKEESIEKLSQLYIIVDEHNNDFELTDRGMQQWVEKAGGSAEDFVMIDMGHEYALIDSDESLSPTDKINRKIAVSEEDTQRKARAHGLRQLLRAHLLMERDVDYIVRNDQIVIIDEHTGRPQPGRRFSEGLHQAIESKEHVTIRKESQTFATITLQNFFRLYEKLAGMTGTAITESKEFKEIYNLYVLQVPTFKTCLRIDHNDEFYMTEREKYHAIVNEIARIHKDGNPILIGTESVEVSEKLSRILKQNRIEHTVLNAKNHAQEAEIIAAAGKLGAVTVATNMAGRGTDIKLDEEAVVVGGLHVIGTSRHQSRRIDRQLRGRCARLGDPGAAKFFLSFEDRLMRLFASPKLNALIRHFRPPEGEAMSDPMFNKLIETAQKRVEARNYTIRKHTLEYDDVMNKQRQTIYAFRNEVLRSEDIFALAKESINHVALMIASLIMSREHPAGHSLPILEEWMNYSFPLQLNIEELRRLPSLDAIAEKVADELTGAFQNKFSSMVEEITAAAGNDVDANGICKDIIRSVMIMHIDEQWKIHLVDMDLLRSEVGLRTVGQKDPLLEFKHESFLLFESLIRDIRIAIVKHLFRLELTMTREQRPQNVIPVVATSFQNDENFGPMELTIISDSDDE.

Residues Q99, 117-121 (GEGKT), and D631 contribute to the ATP site.

This sequence belongs to the SecA family. In terms of assembly, monomer and homodimer. Part of the essential Sec protein translocation apparatus which comprises SecA, SecYEG and auxiliary proteins SecDF. Other proteins may also be involved.

It localises to the cell inner membrane. The protein localises to the cytoplasm. It catalyses the reaction ATP + H2O + cellular proteinSide 1 = ADP + phosphate + cellular proteinSide 2.. Functionally, part of the Sec protein translocase complex. Interacts with the SecYEG preprotein conducting channel. Has a central role in coupling the hydrolysis of ATP to the transfer of proteins into and across the cell membrane, serving as an ATP-driven molecular motor driving the stepwise translocation of polypeptide chains across the membrane. This chain is Protein translocase subunit SecA, found in Chlamydia felis (strain Fe/C-56) (Chlamydophila felis).